Reading from the N-terminus, the 296-residue chain is Polyamine aminopropyltransferase (296 aa).

In terms of domain architecture, PABS spans 5–238 (ELWYETLHAN…GIMTFAWATQ (234 aa)). Position 33 (Q33) interacts with S-methyl-5'-thioadenosine. Spermidine-binding residues include H64 and D88. Residues E108 and 140-141 (DG) contribute to the S-methyl-5'-thioadenosine site. The active-site Proton acceptor is D158. 158–161 (DCTD) is a binding site for spermidine. P165 serves as a coordination point for S-methyl-5'-thioadenosine.

It belongs to the spermidine/spermine synthase family. Homodimer or homotetramer.

The protein localises to the cytoplasm. It carries out the reaction S-adenosyl 3-(methylsulfanyl)propylamine + putrescine = S-methyl-5'-thioadenosine + spermidine + H(+). It functions in the pathway amine and polyamine biosynthesis; spermidine biosynthesis; spermidine from putrescine: step 1/1. In terms of biological role, catalyzes the irreversible transfer of a propylamine group from the amino donor S-adenosylmethioninamine (decarboxy-AdoMet) to putrescine (1,4-diaminobutane) to yield spermidine. In Yersinia pseudotuberculosis serotype O:1b (strain IP 31758), this protein is Polyamine aminopropyltransferase.